The sequence spans 470 residues: 6-phospho-beta-galactosidase 1 (470 aa).

Positions 23, 120, 163, 164, and 300 each coordinate D-galactose 6-phosphate. Residue Glu-164 is the Proton donor of the active site. Catalysis depends on Glu-378, which acts as the Nucleophile. The D-galactose 6-phosphate site is built by Ser-434, Trp-435, Lys-441, and Tyr-443.

This sequence belongs to the glycosyl hydrolase 1 family.

The catalysed reaction is a 6-phospho-beta-D-galactoside + H2O = D-galactose 6-phosphate + an alcohol. The protein operates within carbohydrate metabolism; lactose degradation; D-galactose 6-phosphate and beta-D-glucose from lactose 6-phosphate: step 1/1. This chain is 6-phospho-beta-galactosidase 1, found in Streptococcus pneumoniae serotype 4 (strain ATCC BAA-334 / TIGR4).